The sequence spans 285 residues: VQ motif-containing protein 20 (285 aa).

Over residues 1 to 10 the composition is skewed to basic and acidic residues; the sequence is MSSTYKDNHP. The segment at 1-68 is disordered; the sequence is MSSTYKDNHP…PSPSSFSSAA (68 aa). Over residues 11–23 the composition is skewed to basic residues; sequence YHHHPHHHHHHPK. The VQ signature appears at 91-100; it reads FMALVQKLTG. Residues 195 to 218 are disordered; it reads YSAVAIPPQPPPHPPPPPPPPSMY. Residues 201 to 216 show a composition bias toward pro residues; it reads PPQPPPHPPPPPPPPS.

The protein localises to the nucleus. In terms of biological role, may function as negative regulator of plant defense. This Arabidopsis thaliana (Mouse-ear cress) protein is VQ motif-containing protein 20.